Reading from the N-terminus, the 428-residue chain is Histidine--tRNA ligase (428 aa).

It belongs to the class-II aminoacyl-tRNA synthetase family. As to quaternary structure, homodimer.

The protein resides in the cytoplasm. The catalysed reaction is tRNA(His) + L-histidine + ATP = L-histidyl-tRNA(His) + AMP + diphosphate + H(+). The chain is Histidine--tRNA ligase from Chlamydia trachomatis serovar A (strain ATCC VR-571B / DSM 19440 / HAR-13).